A 308-amino-acid polypeptide reads, in one-letter code: 34.2 kDa protein in rubredoxin operon (308 aa).

Cys-136 and Cys-139 are disulfide-bonded. 268–278 (TNIKGVFAAGD) contributes to the FAD binding site.

Belongs to the class-II pyridine nucleotide-disulfide oxidoreductase family.

The polypeptide is 34.2 kDa protein in rubredoxin operon (Clostridium pasteurianum).